The sequence spans 170 residues: Myosin regulatory light chain 2, skeletal muscle isoform (170 aa).

A2 carries the n,N,N-trimethylalanine modification. S16 and S17 each carry phosphoserine. Residues T26 and T36 each carry the phosphothreonine modification. Positions 26 to 61 (TQIQEFKEAFTVIDQNRDGIIDKEDLRDTFAAMGRL) constitute an EF-hand 1 domain. 4 residues coordinate Ca(2+): D39, N41, D43, and D50. S76 carries the phosphoserine modification. EF-hand domains lie at 96–131 (DPED…QCDR) and 132–167 (FSQE…GDAK). The residue at position 102 (T102) is a Phosphothreonine.

Myosin is a hexamer of 2 heavy chains and 4 light chains.

Its function is as follows. Plays a role in muscle contraction. The sequence is that of Myosin regulatory light chain 2, skeletal muscle isoform from Bos taurus (Bovine).